We begin with the raw amino-acid sequence, 1881 residues long: Endoribonuclease Dicer-S (1881 aa).

The Helicase ATP-binding domain maps to 41–217 (LLEAALDHNI…DLEEKIQNLE (177 aa)). ATP is bound at residue 54–61 (LNSGSGKT). A DECH box motif is present at residues 165–168 (DECH). One can recognise a Helicase C-terminal domain in the interval 425-594 (SFPSPFTNIL…SMDCGNTESE (170 aa)). The region spanning 622–714 (AIGHINRYCA…MPVGKETVKY (93 aa)) is the Dicer dsRNA-binding fold domain. The 148-residue stretch at 887–1034 (KFVEDIEKSE…LVPELCAIHP (148 aa)) folds into the PAZ domain. RNase III domains are found at residues 1249 to 1380 (TSDI…ETSG) and 1625 to 1783 (FENF…MDSG). Positions 1293, 1371, 1374, 1664, 1769, and 1772 each coordinate Mg(2+). One can recognise a DRBM domain in the interval 1808–1873 (VPRSPVRELL…ARRALRSLKA (66 aa)).

This sequence belongs to the helicase family. Dicer subfamily. Component of the RISC loading complex (RLC), or micro-RNA (miRNA) loading complex (miRLC), which is composed of dicer1, ago2 and tarbp2; dicer1 and tarbp2 are required to process precursor miRNAs (pre-miRNAs) to mature miRNAs and then load them onto ago2. Note that the trimeric RLC/miRLC is also referred to as RISC. Mg(2+) serves as cofactor. Mn(2+) is required as a cofactor.

The protein resides in the cytoplasm. The enzyme catalyses Endonucleolytic cleavage to 5'-phosphomonoester.. Its function is as follows. Double-stranded RNA (dsRNA) endoribonuclease playing a central role in short dsRNA-mediated post-transcriptional gene silencing. Cleaves naturally occurring long dsRNAs and short hairpin pre-microRNAs (miRNA) into fragments of twenty-one to twenty-three nucleotides with 3' overhang of two nucleotides, producing respectively short interfering RNAs (siRNA) and mature microRNAs. SiRNAs and miRNAs serve as guide to direct the RNA-induced silencing complex (RISC) to complementary RNAs to degrade them or prevent their translation. Gene silencing mediated by siRNAs, also called RNA interference, controls the elimination of transcripts from mobile and repetitive DNA elements of the genome but also the degradation of exogenous RNA of viral origin for instance. The miRNA pathway on the other side is a mean to specifically regulate the expression of target genes. During embryonic development, at the left-right organizer, post-transcriptionally regulates the expression of dand5 in flow sensor cells. In post-flow stages, acts along with Bicc1 to repress dand5 mRNA translation and decay. Decreased Dand5 expression lifts repression of Nodal and defines leftness by induction of the lateral plate mesoderm Nodal signaling cascade. The sequence is that of Endoribonuclease Dicer-S (dicer1.S) from Xenopus laevis (African clawed frog).